The following is a 154-amino-acid chain: AP-1 complex subunit sigma-3 (154 aa).

It belongs to the adaptor complexes small subunit family. In terms of assembly, adaptor protein complex 1 (AP-1) is a heterotetramer composed of two large adaptins (gamma-type subunit AP1G1 and beta-type subunit AP1B1), a medium adaptin (mu-type subunit AP1M1 or AP1M2) and a small adaptin (sigma-type subunit AP1S1 or AP1S2 or AP1S3).

The protein resides in the golgi apparatus. It is found in the cytoplasmic vesicle membrane. It localises to the membrane. The protein localises to the clathrin-coated pit. In terms of biological role, subunit of clathrin-associated adaptor protein complex 1 that plays a role in protein sorting in the late-Golgi/trans-Golgi network (TGN) and/or endosomes. The AP complexes mediate both the recruitment of clathrin to membranes and the recognition of sorting signals within the cytosolic tails of transmembrane cargo molecules. Involved in TLR3 trafficking. This chain is AP-1 complex subunit sigma-3 (Ap1s3), found in Mus musculus (Mouse).